Consider the following 126-residue polypeptide: Aspartate 1-decarboxylase (126 aa).

The Schiff-base intermediate with substrate; via pyruvic acid role is filled by S25. S25 is modified (pyruvic acid (Ser)). T57 contributes to the substrate binding site. Y58 functions as the Proton donor in the catalytic mechanism. 73-75 lines the substrate pocket; it reads GAA.

The protein belongs to the PanD family. Heterooctamer of four alpha and four beta subunits. The cofactor is pyruvate. Post-translationally, is synthesized initially as an inactive proenzyme, which is activated by self-cleavage at a specific serine bond to produce a beta-subunit with a hydroxyl group at its C-terminus and an alpha-subunit with a pyruvoyl group at its N-terminus.

The protein resides in the cytoplasm. The enzyme catalyses L-aspartate + H(+) = beta-alanine + CO2. Its pathway is cofactor biosynthesis; (R)-pantothenate biosynthesis; beta-alanine from L-aspartate: step 1/1. Catalyzes the pyruvoyl-dependent decarboxylation of aspartate to produce beta-alanine. This Erwinia tasmaniensis (strain DSM 17950 / CFBP 7177 / CIP 109463 / NCPPB 4357 / Et1/99) protein is Aspartate 1-decarboxylase.